The primary structure comprises 766 residues: FYVE, RhoGEF and PH domain-containing protein 4 (766 aa).

Residues 1 to 150 are actin filament-binding; the sequence is MEESNPAPTS…SSIANSHDEN (150 aa). 2 stretches are compositionally biased toward polar residues: residues 47 to 62 and 70 to 85; these read LNIP…TSSP and HSPQ…TQGQ. Disordered stretches follow at residues 47-86 and 143-173; these read LNIP…QGQH and IANS…GEPG. The DH domain maps to 206-393; that stretch reads KLHKIATELL…STAASHSNSA (188 aa). Residues 422–521 form the PH 1 domain; sequence ELIKEGQILK…WIKALQESID (100 aa). The FYVE-type zinc-finger motif lies at 559–619; sequence DNEVTMCMKC…VCKDCYQIIS (61 aa). Positions 565, 568, 582, 585, 590, 593, 611, and 614 each coordinate Zn(2+). Positions 643–740 constitute a PH 2 domain; the sequence is NSEVCSFLQY…WLKIILLAVT (98 aa). Serine 702 and serine 716 each carry phosphoserine. The tract at residues 746 to 766 is disordered; the sequence is GPSEHLATLNNLPGPKKKSEC.

As to quaternary structure, homooligomer. Detected in thymus, lung, heart, skeletal muscle, small intestine, liver, kidney, spleen and testis. Expressed in all parts of the brain and in the spinal cord at embryonic, postnatal, and adult stages. Levels of expression are lower in postnatal and adult tissues than in embryonic tissues.

The protein resides in the cytoplasm. It localises to the cytoskeleton. It is found in the cell projection. Its subcellular location is the filopodium. In terms of biological role, activates CDC42, a member of the Ras-like family of Rho- and Rac proteins, by exchanging bound GDP for free GTP. Activates MAPK8. Plays a role in regulating the actin cytoskeleton and cell shape. Promotes the formation of lamellipodia. This is FYVE, RhoGEF and PH domain-containing protein 4 (Fgd4) from Mus musculus (Mouse).